A 388-amino-acid polypeptide reads, in one-letter code: Protein TsgA homolog (388 aa).

12 consecutive transmembrane segments (helical) span residues 11–31, 50–70, 77–97, 101–121, 133–153, 160–180, 206–226, 244–264, 268–288, 298–318, 332–352, and 360–380; these read WISF…GMIM, TFLN…IEII, IFSF…NSIF, INMF…TFII, LLLL…IVTA, IIWY…FLLT, VFLL…FISW, SLVS…SFII, NLYR…YCFI, YIII…ITLA, LILL…SPIV, and TLIS…LIYF.

It belongs to the major facilitator superfamily. TsgA family.

The protein resides in the cell membrane. The sequence is that of Protein TsgA homolog from Buchnera aphidicola subsp. Acyrthosiphon pisum (strain 5A).